The primary structure comprises 194 residues: NADH-quinone oxidoreductase subunit B 1 (194 aa).

The span at 1-12 (MGVTPVSNQPLV) shows a compositional bias: polar residues. Positions 1–23 (MGVTPVSNQPLVAQQPKGIIDPS) are disordered. [4Fe-4S] cluster is bound by residues C73, C74, C138, and C168.

The protein belongs to the complex I 20 kDa subunit family. As to quaternary structure, NDH-1 is composed of 14 different subunits. Subunits NuoB, C, D, E, F, and G constitute the peripheral sector of the complex. [4Fe-4S] cluster serves as cofactor.

It localises to the cell inner membrane. The catalysed reaction is a quinone + NADH + 5 H(+)(in) = a quinol + NAD(+) + 4 H(+)(out). Functionally, NDH-1 shuttles electrons from NADH, via FMN and iron-sulfur (Fe-S) centers, to quinones in the respiratory chain. The immediate electron acceptor for the enzyme in this species is believed to be ubiquinone. Couples the redox reaction to proton translocation (for every two electrons transferred, four hydrogen ions are translocated across the cytoplasmic membrane), and thus conserves the redox energy in a proton gradient. The polypeptide is NADH-quinone oxidoreductase subunit B 1 (Rhizobium etli (strain ATCC 51251 / DSM 11541 / JCM 21823 / NBRC 15573 / CFN 42)).